The sequence spans 331 residues: Nucleoporin Nup35 (331 aa).

Disordered regions lie at residues 1 to 63 (MEPM…HELN) and 79 to 110 (AHTAVGANSSTTAHGQTHSHHQTGPPTQGLFD). Composition is skewed to polar residues over residues 8 to 20 (SPVNSPGSNQTQY), 35 to 56 (HKNTLSPKTGRSNISFATSPGG), and 84 to 104 (GANSSTTAHGQTHSHHQTGPP). In terms of domain architecture, RRM Nup35-type spans 187–268 (RLSDFWVTIF…SRCTDRSVID (82 aa)).

It belongs to the Nup35 family. As to quaternary structure, interacts with Nup154.

The protein resides in the nucleus. It localises to the nuclear pore complex. In terms of biological role, functions as a component of the nuclear pore complex (NPC). May have a role in the organization of the inner nuclear membrane proteins at the nuclear envelope together with Nup154. The polypeptide is Nucleoporin Nup35 (Drosophila melanogaster (Fruit fly)).